We begin with the raw amino-acid sequence, 146 residues long: Large ribosomal subunit protein uL15 (146 aa).

Residues 1 to 61 (MELNSLKPAA…GGQMPMHRRL (61 aa)) form a disordered region. Residues 30–39 (TATKGHKGQK) are compositionally biased toward basic residues.

This sequence belongs to the universal ribosomal protein uL15 family. As to quaternary structure, part of the 50S ribosomal subunit.

Functionally, binds to the 23S rRNA. The protein is Large ribosomal subunit protein uL15 of Geotalea uraniireducens (strain Rf4) (Geobacter uraniireducens).